A 296-amino-acid polypeptide reads, in one-letter code: Ribosome biogenesis GTPase A (296 aa).

In terms of domain architecture, CP-type G spans 14–178; sequence RRQVTEKLKL…LLDTPGILWP (165 aa). GTP is bound by residues 58–61, 130–135, and glycine 174; these read NKAD and NVGKST.

Belongs to the TRAFAC class YlqF/YawG GTPase family. MTG1 subfamily. In terms of assembly, interacts with ctc. Interacts with the immature 50S ribosome subunit. 2 molecules of rbgA bind to one 50S subunit.

The protein localises to the cytoplasm. Essential protein that is required for a late step of 50S ribosomal subunit assembly. Has GTPase activity that is stimulated by interaction with the immature 50S ribosome subunit. Binds to the 23S rRNA. Required for the association of ribosomal proteins rplP and rpmA with the large subunit. The chain is Ribosome biogenesis GTPase A from Bacillus cereus (strain ATCC 14579 / DSM 31 / CCUG 7414 / JCM 2152 / NBRC 15305 / NCIMB 9373 / NCTC 2599 / NRRL B-3711).